A 391-amino-acid polypeptide reads, in one-letter code: UPF0229 protein CLH_2838 (391 aa).

Disordered stretches follow at residues 1 to 23 (MAIF…DKRR) and 75 to 107 (VATG…GNEE). The segment covering 80 to 92 (GEEKRGDKIESGS) has biased composition (basic and acidic residues).

The protein belongs to the UPF0229 family.

The protein is UPF0229 protein CLH_2838 of Clostridium botulinum (strain Alaska E43 / Type E3).